The following is a 254-amino-acid chain: Syntaxin-6 (254 aa).

Over 1-233 (MSMEDPFFVV…VSHMTSDRRQ (233 aa)) the chain is Cytoplasmic. Residues 46 to 72 (TTNELRNNLRSIEWDLEDLDETISIVE) are a coiled coil. Positions 103–138 (KDQMSNSSMQALAERKNRQALLGESSSQSWSSGPDK) are disordered. Positions 162-224 (QLIVEQQDEQ…DNVMKKLAKV (63 aa)) constitute a t-SNARE coiled-coil homology domain. Residues 234–254 (WCAIIVLFVILLVVLVLFLVL) traverse the membrane as a helical; Anchor for type IV membrane protein segment.

This sequence belongs to the syntaxin family.

It is found in the golgi apparatus membrane. It localises to the golgi apparatus. The protein resides in the trans-Golgi network membrane. Its subcellular location is the recycling endosome membrane. Functionally, SNARE promoting movement of transport vesicles to target membranes. Targets endosomes to the trans-Golgi network, and may therefore function in retrograde trafficking. Together with SNARE STX12, promotes movement of vesicles from endosomes to the cell membrane, and may therefore function in the endocytic recycling pathway. This Gallus gallus (Chicken) protein is Syntaxin-6 (STX6).